A 229-amino-acid polypeptide reads, in one-letter code: Germin-like protein subfamily 1 member 7 (229 aa).

Residues 1–24 (MEGFLRFLVAKAILLALASSFVSC) form the signal peptide. Residues cysteine 34 and cysteine 50 are joined by a disulfide bond. Residues 64-215 (SGLNIAGNTI…AFQLDVNVVK (152 aa)) form the Cupin type-1 domain. A glycan (N-linked (GlcNAc...) asparagine) is linked at asparagine 79. Positions 112, 114, 119, and 161 each coordinate Mn(2+).

The protein belongs to the germin family. As to quaternary structure, oligomer (believed to be a pentamer but probably hexamer).

Its subcellular location is the secreted. It localises to the extracellular space. The protein localises to the apoplast. Its function is as follows. May play a role in plant defense. Probably has no oxalate oxidase activity even if the active site is conserved. The polypeptide is Germin-like protein subfamily 1 member 7 (Arabidopsis thaliana (Mouse-ear cress)).